A 286-amino-acid polypeptide reads, in one-letter code: 3-amino-tetrahydro-pyrrolizinone reductase (286 aa).

Residue Tyr-146 is the Proton acceptor of the active site.

It belongs to the short-chain dehydrogenases/reductases (SDR) family.

The enzyme catalyses 3-amino-5,6,7,7a-tetrahydro-1H-pyrrolizin-1-one + AH2 = 3-amino-tetrahydro-1H-pyrrolizin-1-ol + A. Involved in the biosynthetic pathway of pyrrolizwilline, a pyrrolizidine alkaloid. Catalyzes the reduction of 3-amino-tetrahydro-pyrrolizinone to 3-amino-tetrahydro-pyrrolizinol. The chain is 3-amino-tetrahydro-pyrrolizinone reductase (xhpD) from Xenorhabdus hominickii.